Reading from the N-terminus, the 675-residue chain is Collagen alpha-3(IX) chain (675 aa).

A signal peptide spans Met1–Ala21. Disordered regions lie at residues Gln22 to Ser517 and Lys542 to Thr660. The segment at Gly25 to Glu515 is triple-helical region 3 (COL3). Pro residues-rich tracts occupy residues Gln27–Pro38 and Ser51–Lys60. The span at Ala62–Asp87 shows a compositional bias: low complexity. The segment covering Ala105–Ser125 has biased composition (pro residues). A compositionally biased stretch (gly residues) spans Gly126–Gly135. 2 stretches are compositionally biased toward pro residues: residues Pro136–Pro155 and Leu173–Met184. The segment covering Pro218–Pro233 has biased composition (low complexity). The Cell attachment site motif lies at Arg242–Asp244. Residues Lys301 to Ala317 are compositionally biased toward basic and acidic residues. The span at Glu361 to Arg374 shows a compositional bias: low complexity. N-linked (GlcNAc...) asparagine glycosylation is present at Asn479. Residues Thr481 to Lys508 are compositionally biased toward low complexity. Residues Ala516–Pro546 are nonhelical region 3 (NC3). The tract at residues Gly547–Ser626 is triple-helical region 2 (COL2). Low complexity predominate over residues His569–Thr582. Residues Arg591–Asp593 carry the Cell attachment site motif. Residues Asp613–Gly624 are compositionally biased toward low complexity. A nonhelical region 2 (NC2) region spans residues Lys627 to Asp631. Residues Gly632–Cys658 form a triple-helical region 1 (COL1) region. Residues Asp659–Ser675 form a nonhelical region 1 (NC1) region.

This sequence belongs to the fibril-associated collagens with interrupted helices (FACIT) family. In terms of assembly, trimers composed of three different chains: alpha 1(IX), alpha 2(IX), and alpha 3(IX). Prolines at the third position of the tripeptide repeating unit (G-X-Y) are hydroxylated in some or all of the chains.

The protein localises to the secreted. The protein resides in the extracellular space. It localises to the extracellular matrix. Functionally, collagen type IX is a minor cartilage non-fibrillar collagen. It is associated with type II collagen fibrils. The chain is Collagen alpha-3(IX) chain (COL9A3) from Gallus gallus (Chicken).